The chain runs to 337 residues: Oligopeptide transport ATP-binding protein OppD (337 aa).

The 250-residue stretch at 20–269 folds into the ABC transporter domain; that stretch reads LNVKDLRVTF…PVHPYSIGLL (250 aa). ATP is bound at residue 56–63; sequence GESGSGKS.

Belongs to the ABC transporter superfamily. As to quaternary structure, the complex is composed of two ATP-binding proteins (OppD and OppF), two transmembrane proteins (OppB and OppC) and a solute-binding protein (OppA or MppA).

The protein resides in the cell inner membrane. It catalyses the reaction a [peptide](out) + ATP + H2O = a [peptide](in) + ADP + phosphate + H(+). The enzyme catalyses L-alanyl-gamma-D-glutamyl-meso-2,6-diaminopimelate(out) + ATP + H2O = L-alanyl-gamma-D-glutamyl-meso-2,6-diaminopimelate(in) + ADP + phosphate + H(+). Part of the ABC transporter complex OppABCDF involved in the uptake of oligopeptides and of the ABC transporter complex MppA-OppBCDF involved in the uptake of the cell wall murein tripeptide L-alanyl-gamma-D-glutamyl-meso-diaminopimelate. Probably responsible for energy coupling to the transport system. Plays an important nutritional role and is involved in the recycling of cell wall peptides. This Escherichia coli (strain K12) protein is Oligopeptide transport ATP-binding protein OppD (oppD).